Reading from the N-terminus, the 670-residue chain is FAD-binding monooxygenase ausC (670 aa).

FAD contacts are provided by residues 144–147 (TWYW), 156–157 (DT), and Y162. 154–156 (MCD) is a binding site for NADP(+). Residues 299–305 (TGASAVQ) and 322–323 (RT) contribute to the NADP(+) site.

Belongs to the FAD-binding monooxygenase family. FAD serves as cofactor.

It catalyses the reaction preaustinoid A + AH2 + O2 = preaustinoid A1 + A + H2O. It functions in the pathway secondary metabolite biosynthesis; terpenoid biosynthesis. Functionally, FAD-binding monooxygenase; part of the gene cluster that mediates the biosynthesis of calidodehydroaustin, a fungal meroterpenoid. The first step of the pathway is the synthesis of 3,5-dimethylorsellinic acid by the polyketide synthase ausA. 3,5-dimethylorsellinic acid is then prenylated by the polyprenyl transferase ausN. Further epoxidation by the FAD-dependent monooxygenase ausM and cyclization by the probable terpene cyclase ausL lead to the formation of protoaustinoid A. Protoaustinoid A is then oxidized to spiro-lactone preaustinoid A3 by the combined action of the FAD-binding monooxygenases ausB and ausC, and the dioxygenase ausE. Acid-catalyzed keto-rearrangement and ring contraction of the tetraketide portion of preaustinoid A3 by ausJ lead to the formation of preaustinoid A4. The aldo-keto reductase ausK, with the help of ausH, is involved in the next step by transforming preaustinoid A4 into isoaustinone which is in turn hydroxylated by the P450 monooxygenase ausI to form austinolide. The cytochrome P450 monooxygenase ausG modifies austinolide to austinol. Austinol is further acetylated to austin by the O-acetyltransferase ausP, which spontaneously changes to dehydroaustin. The cytochrome P450 monooxygenase ausR then converts dehydroaustin is into 7-dehydrodehydroaustin. The hydroxylation catalyzed by ausR permits the O-acetyltransferase ausQ to add an additional acetyl group to the molecule, leading to the formation of acetoxydehydroaustin. The short chain dehydrogenase ausT catalyzes the reduction of the double bond present between carbon atoms 1 and 2 to convert 7-dehydrodehydroaustin into 1,2-dihydro-7-hydroxydehydroaustin. AusQ catalyzes not only an acetylation reaction but also the addition of the PKS ausV diketide product to 1,2-dihydro-7-hydroxydehydroaustin, forming precalidodehydroaustin. Finally, the iron/alpha-ketoglutarate-dependent dioxygenase converts precalidodehydroaustin into calidodehydroaustin. This is FAD-binding monooxygenase ausC from Aspergillus calidoustus.